A 221-amino-acid polypeptide reads, in one-letter code: MKKFIYKYSFGALLLLSGLSGLSSCCANSYGSTLAKNTAEIKEESVTLREKPDAGCKKKSSCYLRKFFSRKKPKEKTEPVLPNFKSYADPMTDSERKDLSFVVSAAADKSSIALAMAQGEIKGALSRIREIHPLALLQALAEDPALIAGMKKMQGRDWVWNIFITELSKVFSQAASLGAFSVADVAAFASTLGLDSGTVTSIVDGERWAELIDVVIQNPAI.

A signal peptide spans 1–24 (MKKFIYKYSFGALLLLSGLSGLSS). Cys25 carries N-palmitoyl cysteine lipidation. Cys25 carries the S-diacylglycerol cysteine lipid modification.

This sequence belongs to the chlamydial CPn_0875/CT_734/TC_0107 family.

The protein localises to the cell membrane. The chain is Probable lipoprotein CT_734 from Chlamydia trachomatis serovar D (strain ATCC VR-885 / DSM 19411 / UW-3/Cx).